The primary structure comprises 425 residues: Potassium/proton antiporter CemA (425 aa).

The chain crosses the membrane as a helical span at residues 89-109 (LFLTTVKCLFILLFVPLGINF). Residues 159–278 (LSENQIFFGL…KTDFASVFRT (120 aa)) form an insert region. Residues 173–192 (STFPSSEKSQKSEHFSNQDE) are disordered. The span at 180–192 (KSQKSEHFSNQDE) shows a compositional bias: basic and acidic residues. Transmembrane regions (helical) follow at residues 300–320 (IEAI…CYLL), 350–370 (ILFI…ELFF), and 386–406 (IFLL…YLIF).

It belongs to the CemA family.

The protein localises to the plastid. It is found in the chloroplast inner membrane. It catalyses the reaction K(+)(in) + H(+)(out) = K(+)(out) + H(+)(in). Its function is as follows. Contributes to K(+)/H(+) antiport activity by supporting proton efflux to control proton extrusion and homeostasis in chloroplasts in a light-dependent manner to modulate photosynthesis. Prevents excessive induction of non-photochemical quenching (NPQ) under continuous-light conditions. Indirectly promotes efficient inorganic carbon uptake into chloroplasts. In Tetradesmus obliquus (Green alga), this protein is Potassium/proton antiporter CemA.